The following is a 113-amino-acid chain: Large ribosomal subunit protein P1 (113 aa).

Low complexity predominate over residues 56 to 66 (TAAAAPAPAAG). The tract at residues 56–113 (TAAAAPAPAAGGSAGGEVEAADDDDEEDAEEEAADEGGDDDGDDDEEADGEGLGALFG) is disordered. Positions 74 to 105 (EAADDDDEEDAEEEAADEGGDDDGDDDEEADG) are enriched in acidic residues.

The protein belongs to the eukaryotic ribosomal protein P1/P2 family. As to quaternary structure, part of the 50S ribosomal subunit. Homodimer, it forms part of the ribosomal stalk which helps the ribosome interact with GTP-bound translation factors. Forms a heptameric uL10/P0(P1)2(P1)2(P1)2 complex, where uL10/P0 forms an elongated spine to which the P1 dimers bind in a sequential fashion.

Forms part of the ribosomal stalk, playing a central role in the interaction of the ribosome with GTP-bound translation factors. In Haloferax volcanii (strain ATCC 29605 / DSM 3757 / JCM 8879 / NBRC 14742 / NCIMB 2012 / VKM B-1768 / DS2) (Halobacterium volcanii), this protein is Large ribosomal subunit protein P1.